The chain runs to 292 residues: Ribosomal protein L11 methyltransferase (292 aa).

Residues Thr136, Gly159, Asp181, and Asn228 each coordinate S-adenosyl-L-methionine.

The protein belongs to the methyltransferase superfamily. PrmA family.

The protein resides in the cytoplasm. It carries out the reaction L-lysyl-[protein] + 3 S-adenosyl-L-methionine = N(6),N(6),N(6)-trimethyl-L-lysyl-[protein] + 3 S-adenosyl-L-homocysteine + 3 H(+). Methylates ribosomal protein L11. The chain is Ribosomal protein L11 methyltransferase from Rhizobium etli (strain ATCC 51251 / DSM 11541 / JCM 21823 / NBRC 15573 / CFN 42).